The chain runs to 294 residues: rRNA 2'-O-methyltransferase fibrillarin (294 aa).

A disordered region spans residues 1–62; the sequence is MGKDFKSGGG…GKFGAKGPRG (62 aa). Residues 20–56 show a composition bias toward gly residues; the sequence is GPGGPGGRPFNKGPGGPGGPGGKFGGGRPGGPGGKFG. 3 positions are modified to asymmetric dimethylarginine: Arg27, Arg47, and Arg61. Residues 151–152, 170–171, 195–196, and 215–218 each bind S-adenosyl-L-methionine; these read TT, EF, DA, and DVAQ.

Belongs to the methyltransferase superfamily. Fibrillarin family. Component of box C/D small nucleolar ribonucleoprotein (snoRNP) particles. It is associated with the U3, U8 and U13 small nuclear RNAs. By homology to other fibrillarins, some or all of the N-terminal domain arginines are modified to asymmetric dimethylarginine (DMA).

The protein resides in the nucleus. It localises to the nucleolus. The enzyme catalyses L-glutaminyl-[histone H2A] + S-adenosyl-L-methionine = N(5)-methyl-L-glutaminyl-[histone H2A] + S-adenosyl-L-homocysteine + H(+). S-adenosyl-L-methionine-dependent methyltransferase that has the ability to methylate both RNAs and proteins. Involved in pre-rRNA processing. Utilizes the methyl donor S-adenosyl-L-methionine to catalyze the site-specific 2'-hydroxyl methylation of ribose moieties in pre-ribosomal RNA. Site specificity is provided by a guide RNA that base pairs with the substrate. Methylation occurs at a characteristic distance from the sequence involved in base pairing with the guide RNA. Also acts as a protein methyltransferase by mediating methylation of 'Gln-105' of histone H2A (H2AQ105me), a modification that impairs binding of the FACT complex and is specifically present at 35S ribosomal DNA locus. This Tetrahymena thermophila protein is rRNA 2'-O-methyltransferase fibrillarin (FIB).